A 229-amino-acid polypeptide reads, in one-letter code: Stage III sporulation protein AG (229 aa).

Residues 30–50 traverse the membrane as a helical segment; the sequence is YHYFLFVFVLGVSFMLVSQLF. 2 disordered regions span residues 64–93 and 136–159; these read AVSS…KDSI and SNKN…DQSS. Residues 71–93 show a composition bias toward basic and acidic residues; the sequence is ADSKEKTAEVFKASKSDKPKDSI.

It is found in the cell membrane. This chain is Stage III sporulation protein AG (spoIIIAG), found in Bacillus subtilis (strain 168).